A 327-amino-acid polypeptide reads, in one-letter code: Porphobilinogen deaminase (327 aa).

The residue at position 250 (Cys250) is an S-(dipyrrolylmethanemethyl)cysteine.

The protein belongs to the HMBS family. In terms of assembly, monomer. Requires dipyrromethane as cofactor.

The catalysed reaction is 4 porphobilinogen + H2O = hydroxymethylbilane + 4 NH4(+). It participates in porphyrin-containing compound metabolism; protoporphyrin-IX biosynthesis; coproporphyrinogen-III from 5-aminolevulinate: step 2/4. Its function is as follows. Tetrapolymerization of the monopyrrole PBG into the hydroxymethylbilane pre-uroporphyrinogen in several discrete steps. The protein is Porphobilinogen deaminase of Paraburkholderia phymatum (strain DSM 17167 / CIP 108236 / LMG 21445 / STM815) (Burkholderia phymatum).